The following is a 209-amino-acid chain: Redox-sensing transcriptional repressor Rex (209 aa).

A DNA-binding region (H-T-H motif) is located at residues leucine 16 to phenylalanine 55. Glycine 90–glycine 95 contributes to the NAD(+) binding site.

The protein belongs to the transcriptional regulatory Rex family. Homodimer.

It localises to the cytoplasm. Modulates transcription in response to changes in cellular NADH/NAD(+) redox state. This chain is Redox-sensing transcriptional repressor Rex, found in Bacillus cytotoxicus (strain DSM 22905 / CIP 110041 / 391-98 / NVH 391-98).